The primary structure comprises 497 residues: Acetyltransferase adrJ (497 aa).

Residues H174 and D422 each act as proton acceptor in the active site. The disordered stretch occupies residues 430–451 (SSAQSSSQNTQKKGKPSYVNGV).

Belongs to the plant acyltransferase family. As to quaternary structure, monomer.

It functions in the pathway secondary metabolite biosynthesis; terpenoid biosynthesis. In terms of biological role, acetyltransferase; part of the gene cluster that mediates the biosynthesis of andrastins, meroterpenoid compounds that exhibit inhibitory activity against ras farnesyltransferase, suggesting that they could be promising leads for antitumor agents. The first step of the pathway is the synthesis of 3,5-dimethylorsellinic acid (DMOA) by the polyketide synthase adrD via condensation of one acetyl-CoA starter unit with 3 malonyl-CoA units and 2 methylations. DMAO is then converted to farnesyl-DMAO by the prenyltransferase adrG. The methyltransferase adrK catalyzes the methylation of the carboxyl group of farnesyl-DMAO to farnesyl-DMAO methyl ester which is further converted to epoxyfarnesyl-DMAO methyl ester by the FAD-dependent monooxygenase adrH. The terpene cyclase adrI then catalyzes the carbon skeletal rearrangement to generate the andrastin E, the first compound in the pathway having the andrastin scaffold, with the tetracyclic ring system. The post-cyclization tailoring enzymes adrF, adrE, adrJ, and adrA, are involved in the conversion of andrastin E into andrastin A. The short chain dehydrogenase adrF is responsible for the oxidation of the C-3 a hydroxyl group of andrastin E to yield the corresponding ketone, andrastin D. The ketoreductase adrE stereoselectively reduces the carbonyl moiety to reverse the stereochemistry of the C-3 position to yield andrastin F. The acetyltransferase adrJ is the acetyltransferase that attaches the acetyl group to the C-3 hydroxyl group of andrastin F to yield andrastin C. Finally, the cytochrome P450 monooxygenase adrA catalyzes two sequential oxidation reactions of the C-23 methyl group, to generate the corresponding alcohol andrastin B, and aldehyde andrastin A. The sequence is that of Acetyltransferase adrJ from Penicillium rubens (strain ATCC 28089 / DSM 1075 / NRRL 1951 / Wisconsin 54-1255) (Penicillium chrysogenum).